The primary structure comprises 212 residues: Adenylate kinase (212 aa).

10 to 15 (GAGKGT) serves as a coordination point for ATP. The NMP stretch occupies residues 30–59 (STGDMFRAAMANQTEMGRLAKSYIDKGELV). AMP-binding positions include T31, R36, 57–59 (ELV), 86–89 (GYPR), and Q93. An LID region spans residues 127-159 (GRIINRKTGETFHKVFNPPVDYKEEDYYQREDD). ATP contacts are provided by residues R128 and 137 to 138 (TF). 2 residues coordinate AMP: R156 and R167. Residue Q195 coordinates ATP.

Belongs to the adenylate kinase family. As to quaternary structure, monomer.

It localises to the cytoplasm. It catalyses the reaction AMP + ATP = 2 ADP. Its pathway is purine metabolism; AMP biosynthesis via salvage pathway; AMP from ADP: step 1/1. Catalyzes the reversible transfer of the terminal phosphate group between ATP and AMP. Plays an important role in cellular energy homeostasis and in adenine nucleotide metabolism. This is Adenylate kinase from Streptococcus pyogenes serotype M1.